The sequence spans 159 residues: MINLIPMTVRGAEKLREELEQLKNVKRPRITVQIAEARKHGDLKENAEYHSAREEQSFCEGRIQEIESKLSNSQIIDITKISNDGRVVFGSTVTILNIKNNAVFTYQIVGDDESDFKKNLISINSPMSRGLIGKTVNTIAIIHTPSGNVKYKILKIDYI.

Residues 7–72 adopt a coiled-coil conformation; that stretch reads MTVRGAEKLR…IQEIESKLSN (66 aa).

It belongs to the GreA/GreB family.

Functionally, necessary for efficient RNA polymerase transcription elongation past template-encoded arresting sites. The arresting sites in DNA have the property of trapping a certain fraction of elongating RNA polymerases that pass through, resulting in locked ternary complexes. Cleavage of the nascent transcript by cleavage factors such as GreA or GreB allows the resumption of elongation from the new 3'terminus. GreA releases sequences of 2 to 3 nucleotides. The polypeptide is Transcription elongation factor GreA (Buchnera aphidicola subsp. Schizaphis graminum (strain Sg)).